The following is a 342-amino-acid chain: 29 kDa ribonucleoprotein, chloroplastic (342 aa).

The transit peptide at 1–65 (MSASASSLSA…PAEYPSRFVR (65 aa)) directs the protein to the chloroplast. In terms of domain architecture, RRM 1 spans 99 to 177 (LKLFVGNLSF…RPLRVNAGPP (79 aa)). Phosphoserine is present on residues Ser-107 and Ser-204. The disordered stretch occupies residues 167 to 255 (GRPLRVNAGP…GSGSGSGSGS (89 aa)). The interval 178–256 (PPKREESFSR…SGSGSGSGSG (79 aa)) is linker (Gly-rich). 2 stretches are compositionally biased toward gly residues: residues 190 to 237 (RSGG…GYGG) and 245 to 255 (SGSGSGSGSGS). Residues 257–335 (NRLYVGNLSW…RQIRVSEAEA (79 aa)) form the RRM 2 domain.

It is found in the plastid. The protein localises to the chloroplast. Its function is as follows. Stabilizes specific chloroplast mRNAs. Required for normal chloroplast development under cold stress conditions by stabilizing transcripts of numerous mRNAs under these conditions. This Arabidopsis thaliana (Mouse-ear cress) protein is 29 kDa ribonucleoprotein, chloroplastic.